The chain runs to 305 residues: Mitochondrial uncoupling protein 2 (305 aa).

Solcar repeat units lie at residues 10–104 (ISFL…VKTL), 114–205 (IPLY…IKET), and 214–297 (DSVL…VKKV). Transmembrane regions (helical) follow at residues 16-36 (FICS…LDTA), 73-93 (ISGL…YGGL), 120-140 (ILAA…TDLV), 179-199 (TGLG…LASY), 220-240 (LLAG…IDVV), and 270-290 (YKGF…MFLT).

The protein belongs to the mitochondrial carrier (TC 2.A.29) family.

It is found in the mitochondrion inner membrane. Functionally, PUMPS are mitochondrial transporter proteins that create proton leaks across the inner mitochondrial membrane, thus uncoupling oxidative phosphorylation. This leads to a decrease in the efficiency of oxidative phosphorylation and an increase in heat production. May be involved in protecting plant cells against oxidative stress damage. The protein is Mitochondrial uncoupling protein 2 (PUMP2) of Arabidopsis thaliana (Mouse-ear cress).